The sequence spans 286 residues: MIINHNMSAMFAQRTLGHTNVQVGKGIEKLSSGYRINRAGDDASGLAVSEKMRSQIRGLNQASTNASNGVNFIQVTEAYLQETTDIMQRIRELAIQAANGIYSAEDRMQIQVEVSQLVAEVDRIASSAQFNGMNLLTGRFSRTEGENVIGGSMWFHIGANMDQRMRVYIGTMTAVALGVRNGVDESIMSIETADSANKSIGTIDAALKRINKQRADLGGYQNRMEYTVVGLDIAAENLQAAESRIRDANIAKQMVEYTKNQVLTQSGTAMLAQANTSAQSILSILR.

Residues 231–286 are required for interaction with FliW; it reads LDIAAENLQAAESRIRDANIAKQMVEYTKNQVLTQSGTAMLAQANTSAQSILSILR.

It belongs to the bacterial flagellin family. As to quaternary structure, the flagellum consists of an outer layer composed of repeating units of FlaA around a core that contains several antigenically related polypeptides. Interacts via its C-terminus with FliW; a synthetic peptide of residues 229-247 partially blocks binding to FliW.

Its subcellular location is the periplasmic flagellum. It localises to the periplasm. Functionally, component of the core of the flagella. In Treponema pallidum (strain Nichols), this protein is Flagellin FlaB1 (flaB1).